A 532-amino-acid polypeptide reads, in one-letter code: Flavin-containing monooxygenase 3 (532 aa).

Residues 9 to 13, E32, 40 to 41, and 61 to 62 contribute to the FAD site; these read GAGVS, LW, and NS. NADP(+)-binding positions include 60–61 and 195–198; these read SN and SGCD. The residue at position 401 (S401) is a Phosphoserine. The chain crosses the membrane as a helical span at residues 510–530; that stretch reads FFFHWLKLFAIPILLIAVFLV.

It belongs to the FMO family. FAD is required as a cofactor. In terms of tissue distribution, liver.

It localises to the microsome membrane. The protein localises to the endoplasmic reticulum membrane. It catalyses the reaction trimethylamine + NADPH + O2 = trimethylamine N-oxide + NADP(+) + H2O. The catalysed reaction is N,N-dimethylaniline + NADPH + O2 + H(+) = N,N-dimethylaniline N-oxide + NADP(+) + H2O. It carries out the reaction hypotaurine + NADPH + O2 + H(+) = taurine + NADP(+) + H2O. The enzyme catalyses (S)-nicotine + NADPH + O2 = trans-(S)-nicotine N(1')-oxide + NADP(+) + H2O. It catalyses the reaction albendazole + NADPH + O2 + H(+) = albendazole S-oxide + NADP(+) + H2O. Its function is as follows. Essential hepatic enzyme that catalyzes the oxygenation of a wide variety of nitrogen- and sulfur-containing compounds including drugs as well as dietary compounds. Plays an important role in the metabolism of trimethylamine (TMA), via the production of trimethylamine N-oxide (TMAO) metabolite. TMA is generated by the action of gut microbiota using dietary precursors such as choline, choline containing compounds, betaine or L-carnitine. By regulating TMAO concentration, FMO3 directly impacts both platelet responsiveness and rate of thrombus formation. The sequence is that of Flavin-containing monooxygenase 3 (FMO3) from Homo sapiens (Human).